Here is an 820-residue protein sequence, read N- to C-terminus: Trimethylamine-N-oxide reductase (820 aa).

Residues M1–A33 constitute a signal peptide (tat-type signal). Mo-bis(molybdopterin guanine dinucleotide) is bound at residue S179.

Belongs to the prokaryotic molybdopterin-containing oxidoreductase family. The cofactor is Mo-bis(molybdopterin guanine dinucleotide). Post-translationally, predicted to be exported by the Tat system. The position of the signal peptide cleavage has not been experimentally proven.

It localises to the periplasm. It carries out the reaction trimethylamine + 2 Fe(III)-[cytochrome c] + H2O = trimethylamine N-oxide + 2 Fe(II)-[cytochrome c] + 3 H(+). Reduces trimethylamine-N-oxide (TMAO) into trimethylamine; an anaerobic reaction coupled to energy-yielding reactions. This Vibrio parahaemolyticus serotype O3:K6 (strain RIMD 2210633) protein is Trimethylamine-N-oxide reductase (torA).